We begin with the raw amino-acid sequence, 510 residues long: Inositol-3-phosphate synthase (510 aa).

NAD(+) contacts are provided by glycine 70, glycine 71, asparagine 72, asparagine 73, aspartate 143, isoleucine 180, glutamine 190, arginine 193, threonine 230, alanine 231, asparagine 232, threonine 233, glycine 281, serine 282, aspartate 306, serine 309, asparagine 340, asparagine 341, aspartate 342, lysine 355, glycine 393, aspartate 394, aspartate 422, and serine 423.

It belongs to the myo-inositol 1-phosphate synthase family. NAD(+) is required as a cofactor.

It localises to the cytoplasm. It is found in the cytosol. The protein resides in the nucleus. It catalyses the reaction D-glucose 6-phosphate = 1D-myo-inositol 3-phosphate. Its pathway is polyol metabolism; myo-inositol biosynthesis; myo-inositol from D-glucose 6-phosphate: step 1/2. Functionally, key enzyme in myo-inositol biosynthesis pathway that catalyzes the conversion of glucose 6-phosphate to 1-myo-inositol 1-phosphate in a NAD-dependent manner. This Hordeum vulgare (Barley) protein is Inositol-3-phosphate synthase.